A 304-amino-acid polypeptide reads, in one-letter code: Phosphoribosylaminoimidazole-succinocarboxamide synthase (304 aa).

It belongs to the SAICAR synthetase family.

The enzyme catalyses 5-amino-1-(5-phospho-D-ribosyl)imidazole-4-carboxylate + L-aspartate + ATP = (2S)-2-[5-amino-1-(5-phospho-beta-D-ribosyl)imidazole-4-carboxamido]succinate + ADP + phosphate + 2 H(+). Its pathway is purine metabolism; IMP biosynthesis via de novo pathway; 5-amino-1-(5-phospho-D-ribosyl)imidazole-4-carboxamide from 5-amino-1-(5-phospho-D-ribosyl)imidazole-4-carboxylate: step 1/2. This Komagataella pastoris (Yeast) protein is Phosphoribosylaminoimidazole-succinocarboxamide synthase (ADE1).